We begin with the raw amino-acid sequence, 125 residues long: Ribosome-binding factor A (125 aa).

The protein belongs to the RbfA family. Monomer. Binds 30S ribosomal subunits, but not 50S ribosomal subunits or 70S ribosomes.

It is found in the cytoplasm. Its function is as follows. One of several proteins that assist in the late maturation steps of the functional core of the 30S ribosomal subunit. Associates with free 30S ribosomal subunits (but not with 30S subunits that are part of 70S ribosomes or polysomes). Required for efficient processing of 16S rRNA. May interact with the 5'-terminal helix region of 16S rRNA. The protein is Ribosome-binding factor A of Fervidobacterium nodosum (strain ATCC 35602 / DSM 5306 / Rt17-B1).